A 270-amino-acid polypeptide reads, in one-letter code: Pyrroline-5-carboxylate reductase (270 aa).

It belongs to the pyrroline-5-carboxylate reductase family.

Its subcellular location is the cytoplasm. It carries out the reaction L-proline + NADP(+) = (S)-1-pyrroline-5-carboxylate + NADPH + 2 H(+). The enzyme catalyses L-proline + NAD(+) = (S)-1-pyrroline-5-carboxylate + NADH + 2 H(+). It functions in the pathway amino-acid biosynthesis; L-proline biosynthesis; L-proline from L-glutamate 5-semialdehyde: step 1/1. Functionally, catalyzes the reduction of 1-pyrroline-5-carboxylate (PCA) to L-proline. The protein is Pyrroline-5-carboxylate reductase of Methanosarcina acetivorans (strain ATCC 35395 / DSM 2834 / JCM 12185 / C2A).